Here is a 257-residue protein sequence, read N- to C-terminus: MFQPAAKRGFTIESLVAKDGGTGGSPGSGGAGSHPLAVAASEEPLRPTALNYPHPSAAETAFVSGFPAAAAAGAGRSLYGGPELVFPEAMNHPALTVHPAHQLGSSSLQPPHSFFSAQHRDPLHFYPWVLRNRFFGHRFQASDVPQDGLLLHGPFARKPKRIRTAFSPSQLLRLERAFEKNHYVVGAERKQLAGSLSLSETQVKVWFQNRRTKYKRQKLEEEGPESEQKKKGSHHINRWRIATKQANGEDIDVTSND.

The segment at residues 159-218 (PKRIRTAFSPSQLLRLERAFEKNHYVVGAERKQLAGSLSLSETQVKVWFQNRRTKYKRQK) is a DNA-binding region (homeobox). Residues 216-257 (RQKLEEEGPESEQKKKGSHHINRWRIATKQANGEDIDVTSND) are disordered. Basic and acidic residues predominate over residues 217 to 230 (QKLEEEGPESEQKK).

The protein belongs to the EMX homeobox family. As to quaternary structure, interacts with WRD11 (via the N-terminal and the central portion of the protein); the interaction associates EMX1 with GLI3. In terms of tissue distribution, cerebral cortex. Expressed in the olfactory bulbs.

The protein localises to the nucleus. Transcription factor, which in cooperation with EMX2, acts to generate the boundary between the roof and archipallium in the developing brain. May function in combinations with OTX1/2 to specify cell fates in the developing central nervous system. This Mus musculus (Mouse) protein is Homeobox protein EMX1 (Emx1).